We begin with the raw amino-acid sequence, 115 residues long: Inner membrane protein YidH (115 aa).

Topologically, residues M1 to L30 are cytoplasmic. The chain crosses the membrane as a helical span at residues G31–I51. Residues R52 to E53 lie on the Periplasmic side of the membrane. The chain crosses the membrane as a helical span at residues L54–W74. Over L75–S92 the chain is Cytoplasmic. A helical membrane pass occupies residues L93–Y113. At A114–G115 the chain is on the periplasmic side.

The protein to M.tuberculosis Rv2272.

It is found in the cell inner membrane. The protein is Inner membrane protein YidH (yidH) of Escherichia coli O157:H7.